Consider the following 201-residue polypeptide: Potassium-transporting ATPase KdpC subunit (201 aa).

Residues 7–29 (PALVLLTALTAITGLAYPLAMTG) form a helical membrane-spanning segment.

The protein belongs to the KdpC family. The system is composed of three essential subunits: KdpA, KdpB and KdpC.

Its subcellular location is the cell inner membrane. Its function is as follows. Part of the high-affinity ATP-driven potassium transport (or Kdp) system, which catalyzes the hydrolysis of ATP coupled with the electrogenic transport of potassium into the cytoplasm. This subunit acts as a catalytic chaperone that increases the ATP-binding affinity of the ATP-hydrolyzing subunit KdpB by the formation of a transient KdpB/KdpC/ATP ternary complex. This is Potassium-transporting ATPase KdpC subunit from Methylobacterium radiotolerans (strain ATCC 27329 / DSM 1819 / JCM 2831 / NBRC 15690 / NCIMB 10815 / 0-1).